Consider the following 949-residue polypeptide: MDLVYGLVWLLTVLLEGISGQGVYAPPTVRIVHSGLACNIEEERYSERVYTIREGETLELTCLVTGHPRPQIRWTKTAGSASDRFQDSSVFNETLRITSIQRHQGGRYYCKAENGLGSPAIKSIRVDVYYLDDPVVTVHQSIGEAKEQFYYERTVFLRCVANSNPPVRYSWRRGQEVLLQGSDKGVEIYEPFFTQGETKILKLKNLRPQDYANYSCIASVRNVCNIPDKMVSFRLSNKTASPSIKLLVDDPIVVNPGEAITLVCVTTGGEPMPSLTWVRSFGTLPEKIVLNGGTLTIPAITSDDAGTYSCIANNNVGNPAKKSTNIIVRALKKGRFWITPDPYHKDDNIQIGREVKISCQVEAVPSEELTFSWFKNGRPLRSSERMVITQTDPDVSPGTTNLDIIDLKFTDFGTYTCVASLKGGGISDISIDVNISSSTVPPNLTVPQEKSPLVTREGDTIELQCQVTGKPKPIILWSRADKEVAMPDGTMQMESYDGTLRIVNVSREMSGMYRCQTSQYNGFNVKPREALVQLIVQYPPAVEPAFLEIRQGQDRSVTMSCRVLRAYPIRVLTYEWRLGNKLLRTGQFDSQEYTEYPLKSLSNENYGVYNCSIINEAGAGRCSFLVTGKAYAPEFYYDTYNPVWQNRHRVYSYSLQWTQMNPDAVDRIVAYRLGIRQAGQQRWWEQEIKINGNIQKGELITYNLTELIKPEAYEVRLTPLTKFGEGDSTIRVIKYTGEFHCGFEDGNICLFTQDDTDNFDWTKQSTATRNTKYTPNTGPNADRSGSKEGFYMYIETSRPRLEGEKARLLSPVFSIAPKNPYGPTNSAYCFSFFYHMYGQHIGVLNVYLRLKGQTTIENPLWSSSGNKGQRWNEAHVNIYPITSFQLIFEGIRGPGIEGDIAIDDVSIAEGECAKQDLPTKNSVDGAVGILVHIWLFPVIILISILSPRR.

Positions 1–25 (MDLVYGLVWLLTVLLEGISGQGVYA) are cleaved as a signal peptide. Ig-like domains follow at residues 27 to 127 (PTVR…IRVD) and 134 to 232 (PVVT…KMVS). Disulfide bonds link Cys62–Cys110 and Cys159–Cys216. N-linked (GlcNAc...) asparagine glycosylation is found at Asn92, Asn213, and Asn237. 4 consecutive Ig-like domains span residues 242–328 (PSIK…NIIV), 340–436 (PDPY…VNIS), 442–533 (PNLT…ALVQ), and 540–627 (PAVE…FLVT). Cystine bridges form between Cys264-Cys310 and Cys359-Cys417. N-linked (GlcNAc...) asparagine glycosylation is found at Asn434, Asn443, Asn504, Asn610, and Asn703. Disulfide bonds link Cys465-Cys515 and Cys561-Cys611. The Fibronectin type-III domain occupies 638-738 (DTYNPVWQNR…TIRVIKYTGE (101 aa)). One can recognise an MAM domain in the interval 739-914 (FHCGFEDGNI…VSIAEGECAK (176 aa)). A lipid anchor (GPI-anchor amidated aspartate) is attached at Asp924. Positions 925 to 949 (GAVGILVHIWLFPVIILISILSPRR) are cleaved as a propeptide — removed in mature form.

Interacts (through the Ig-like domains) with NLGN2. In terms of tissue distribution, expressed predominantly in neuronal tissue. Expressed in brain.

It is found in the cell membrane. Its function is as follows. May be involved in cell-cell interactions. This Rattus norvegicus (Rat) protein is MAM domain-containing glycosylphosphatidylinositol anchor protein 2 (Mdga2).